The chain runs to 176 residues: Protein tyrosine phosphatase PRL-1 (176 aa).

The Tyrosine-protein phosphatase domain occupies 13 to 165 (GESDAVVFRF…YKPRHQEGNE (153 aa)). Cysteines 52 and 107 form a disulfide. Residue D75 is the Proton donor of the active site. The Phosphocysteine intermediate role is filled by C107. Substrate is bound at residue 109–113 (AGLGR). Cysteine methyl ester is present on C173. The S-farnesyl cysteine moiety is linked to residue C173. Positions 174-176 (AVM) are cleaved as a propeptide — removed in mature form.

Belongs to the protein-tyrosine phosphatase family.

The protein resides in the flagellar pocket. The enzyme catalyses O-phospho-L-tyrosyl-[protein] + H2O = L-tyrosyl-[protein] + phosphate. Activated in a reduced environment which promotes the reduction of the disulfide bond between the regulatory Cys-52 and the catalytic Cys-107 residues. Inhibited by sodium orthovanadate. Its function is as follows. Has protein tyrosine phosphatase activity. This Trypanosoma cruzi (strain CL Brener) protein is Protein tyrosine phosphatase PRL-1.